A 504-amino-acid chain; its full sequence is Cytochrome P450 71B4 (504 aa).

A helical transmembrane segment spans residues 1–21; the sequence is MVSLLSFFLLLLVPIFFLLIF. Residue C446 participates in heme binding.

The protein belongs to the cytochrome P450 family. The cofactor is heme.

It is found in the membrane. This is Cytochrome P450 71B4 (CYP71B4) from Arabidopsis thaliana (Mouse-ear cress).